A 455-amino-acid polypeptide reads, in one-letter code: EP1-like glycoprotein 1 (455 aa).

An N-terminal signal peptide occupies residues 1-22 (MLRFDYLLITALAISTVSVVMA). One can recognise a Bulb-type lectin domain in the interval 43-163 (TEYDASYRFL…HGKFVWQSFD (121 aa)). N-linked (GlcNAc...) asparagine glycosylation is found at asparagine 106, asparagine 191, asparagine 211, asparagine 241, and asparagine 289. The residue at position 374 (cysteine 374) is an S-nitrosocysteine. A PAN domain is found at 374–455 (CSGGKGKAVN…NTSSVAYIKY (82 aa)). Intrachain disulfides connect cysteine 410–cysteine 432 and cysteine 414–cysteine 420. Residue asparagine 446 is glycosylated (N-linked (GlcNAc...) asparagine).

The protein resides in the secreted. The protein localises to the cell wall. The chain is EP1-like glycoprotein 1 from Arabidopsis thaliana (Mouse-ear cress).